The sequence spans 304 residues: NADH-cytochrome b5 reductase 2 (304 aa).

Residues 6–26 (GTPVVVAVAAVAATVLLLLLL) form a helical membrane-spanning segment. An FAD-binding FR-type domain is found at 43–155 (QAKYPLPLVG…RGPNGLLVYK (113 aa)). Residues 135–165 (DSMK…IKPD) and 174–209 (FAKH…KCYL) contribute to the FAD site.

Belongs to the flavoprotein pyridine nucleotide cytochrome reductase family. The cofactor is FAD.

The protein resides in the membrane. It carries out the reaction 2 Fe(III)-[cytochrome b5] + NADH = 2 Fe(II)-[cytochrome b5] + NAD(+) + H(+). In terms of biological role, NADH-cytochrome b5 reductases are involved in desaturation and elongation of fatty acids, cholesterol biosynthesis and drug metabolism. This Gallus gallus (Chicken) protein is NADH-cytochrome b5 reductase 2 (CYB5R2).